Here is a 434-residue protein sequence, read N- to C-terminus: Serine protease HTRA2, mitochondrial (434 aa).

Positions 34-65 are disordered; it reads YSNNTANITTDSSSSSNNNSNRNNKNDNNNED. Over residues 35–60 the composition is skewed to low complexity; the sequence is SNNTANITTDSSSSSNNNSNRNNKND. A helical membrane pass occupies residues 74 to 92; the sequence is LVRFFVPFSLGAVASSLVM. Positions 85–88 match the IAP-binding motif; it reads AVAS. The interval 151–314 is serine protease; that stretch reads SNGSGFVIEQ…IPIDYVKVFL (164 aa). Catalysis depends on charge relay system residues His169, Asp201, and Ser278. The region spanning 337-424 is the PDZ domain; it reads MGITMLTLTP…NMIIMRGVKQ (88 aa).

This sequence belongs to the peptidase S1C family. As to quaternary structure, interacts with th/DIAP1 (via BIR 2 domain).

It is found in the mitochondrion intermembrane space. It localises to the mitochondrion membrane. It carries out the reaction Cleavage of non-polar aliphatic amino-acids at the P1 position, with a preference for Val, Ile and Met. At the P2 and P3 positions, Arg is selected most strongly with a secondary preference for other hydrophilic residues.. Functionally, serine protease that shows proteolytic activity against a non-specific substrate beta-casein. Promotes or induces cell death either by direct binding to and inhibition of BIRC proteins (also called inhibitor of apoptosis proteins, IAPs), leading to an increase in caspase activity, or by a BIRC inhibition-independent, caspase-independent and serine protease activity-dependent mechanism. Can antagonize antiapoptotic activity of th/Diap1 by directly inducing the degradation of th/Diap1. In Drosophila willistoni (Fruit fly), this protein is Serine protease HTRA2, mitochondrial.